The chain runs to 205 residues: Imidazole glycerol phosphate synthase subunit HisH (205 aa).

Positions 1–205 (MVGIVNYNIG…RILKNFCEIG (205 aa)) constitute a Glutamine amidotransferase type-1 domain. Cys-79 (nucleophile) is an active-site residue. Active-site residues include His-186 and Glu-188.

In terms of assembly, heterodimer of HisH and HisF.

Its subcellular location is the cytoplasm. The enzyme catalyses 5-[(5-phospho-1-deoxy-D-ribulos-1-ylimino)methylamino]-1-(5-phospho-beta-D-ribosyl)imidazole-4-carboxamide + L-glutamine = D-erythro-1-(imidazol-4-yl)glycerol 3-phosphate + 5-amino-1-(5-phospho-beta-D-ribosyl)imidazole-4-carboxamide + L-glutamate + H(+). It catalyses the reaction L-glutamine + H2O = L-glutamate + NH4(+). The protein operates within amino-acid biosynthesis; L-histidine biosynthesis; L-histidine from 5-phospho-alpha-D-ribose 1-diphosphate: step 5/9. Functionally, IGPS catalyzes the conversion of PRFAR and glutamine to IGP, AICAR and glutamate. The HisH subunit catalyzes the hydrolysis of glutamine to glutamate and ammonia as part of the synthesis of IGP and AICAR. The resulting ammonia molecule is channeled to the active site of HisF. In Wolinella succinogenes (strain ATCC 29543 / DSM 1740 / CCUG 13145 / JCM 31913 / LMG 7466 / NCTC 11488 / FDC 602W) (Vibrio succinogenes), this protein is Imidazole glycerol phosphate synthase subunit HisH.